Here is a 126-residue protein sequence, read N- to C-terminus: UPF0102 protein Cphamn1_0017 (126 aa).

The protein belongs to the UPF0102 family.

The protein is UPF0102 protein Cphamn1_0017 of Chlorobium phaeobacteroides (strain BS1).